A 603-amino-acid chain; its full sequence is Probable potassium transport system protein Kup (603 aa).

Helical transmembrane passes span 15–35 (GLVFGDIGTSPIYTLTVIFLL), 43–63 (VIGVLSLIIWTLITLVTVEYA), 94–114 (AAFITLLAYIGVSFLVGDGVI), 136–156 (IGQGAIMFIAGIIAVALFSVQ), 163–183 (ITWVFGPVMVLWFASLAFSGI), 201–221 (AISFLLHNGFTGFFVLSEVIL), 244–264 (AWRLVFSALVLNYLGQGAFII), 284–304 (IYIPFLILSITATIIASQAMI), 336–356 (IYIGAVNWLLLISVLFMIFEF), 367–387 (GLAVTGTMSITGLMMTLIFYL), 391–411 (MFRSFVSLFVTVIDVVFLLSN), and 415–435 (IPHGGYWSIVIAAIAFSLIII).

Belongs to the HAK/KUP transporter (TC 2.A.72) family.

The protein resides in the cell membrane. It catalyses the reaction K(+)(in) + H(+)(in) = K(+)(out) + H(+)(out). Its function is as follows. Transport of potassium into the cell. Likely operates as a K(+):H(+) symporter. This Methanosarcina acetivorans (strain ATCC 35395 / DSM 2834 / JCM 12185 / C2A) protein is Probable potassium transport system protein Kup.